Consider the following 293-residue polypeptide: Pyridoxal 5'-phosphate synthase subunit PdxS (293 aa).

Position 23 (Asp23) interacts with D-ribose 5-phosphate. The Schiff-base intermediate with D-ribose 5-phosphate role is filled by Lys80. Gly152 serves as a coordination point for D-ribose 5-phosphate. Position 164 (Arg164) interacts with D-glyceraldehyde 3-phosphate. Residues Gly213 and 234–235 (GS) contribute to the D-ribose 5-phosphate site.

Belongs to the PdxS/SNZ family. As to quaternary structure, in the presence of PdxT, forms a dodecamer of heterodimers.

The catalysed reaction is aldehydo-D-ribose 5-phosphate + D-glyceraldehyde 3-phosphate + L-glutamine = pyridoxal 5'-phosphate + L-glutamate + phosphate + 3 H2O + H(+). The protein operates within cofactor biosynthesis; pyridoxal 5'-phosphate biosynthesis. Its function is as follows. Catalyzes the formation of pyridoxal 5'-phosphate from ribose 5-phosphate (RBP), glyceraldehyde 3-phosphate (G3P) and ammonia. The ammonia is provided by the PdxT subunit. Can also use ribulose 5-phosphate and dihydroxyacetone phosphate as substrates, resulting from enzyme-catalyzed isomerization of RBP and G3P, respectively. The polypeptide is Pyridoxal 5'-phosphate synthase subunit PdxS (Methanothermobacter thermautotrophicus (strain ATCC 29096 / DSM 1053 / JCM 10044 / NBRC 100330 / Delta H) (Methanobacterium thermoautotrophicum)).